The primary structure comprises 335 residues: Holliday junction branch migration complex subunit RuvB (335 aa).

The large ATPase domain (RuvB-L) stretch occupies residues 1–183; the sequence is MDERIISSET…FGVIDHLEFY (183 aa). Residues leucine 22, arginine 23, glycine 64, lysine 67, threonine 68, threonine 69, 130-132, arginine 173, tyrosine 183, and arginine 220 each bind ATP; that span reads EDY. Threonine 68 contributes to the Mg(2+) binding site. Residues 184–254 form a small ATPAse domain (RuvB-S) region; sequence TEEQLTEIVL…LAKEALTLLQ (71 aa). Residues 257–335 are head domain (RuvB-H); the sequence is PRGLDTIDQK…HLGISYEKEV (79 aa). Residues arginine 293, arginine 312, and arginine 317 each coordinate DNA.

The protein belongs to the RuvB family. In terms of assembly, homohexamer. Forms an RuvA(8)-RuvB(12)-Holliday junction (HJ) complex. HJ DNA is sandwiched between 2 RuvA tetramers; dsDNA enters through RuvA and exits via RuvB. An RuvB hexamer assembles on each DNA strand where it exits the tetramer. Each RuvB hexamer is contacted by two RuvA subunits (via domain III) on 2 adjacent RuvB subunits; this complex drives branch migration. In the full resolvosome a probable DNA-RuvA(4)-RuvB(12)-RuvC(2) complex forms which resolves the HJ.

Its subcellular location is the cytoplasm. The catalysed reaction is ATP + H2O = ADP + phosphate + H(+). The RuvA-RuvB-RuvC complex processes Holliday junction (HJ) DNA during genetic recombination and DNA repair, while the RuvA-RuvB complex plays an important role in the rescue of blocked DNA replication forks via replication fork reversal (RFR). RuvA specifically binds to HJ cruciform DNA, conferring on it an open structure. The RuvB hexamer acts as an ATP-dependent pump, pulling dsDNA into and through the RuvAB complex. RuvB forms 2 homohexamers on either side of HJ DNA bound by 1 or 2 RuvA tetramers; 4 subunits per hexamer contact DNA at a time. Coordinated motions by a converter formed by DNA-disengaged RuvB subunits stimulates ATP hydrolysis and nucleotide exchange. Immobilization of the converter enables RuvB to convert the ATP-contained energy into a lever motion, pulling 2 nucleotides of DNA out of the RuvA tetramer per ATP hydrolyzed, thus driving DNA branch migration. The RuvB motors rotate together with the DNA substrate, which together with the progressing nucleotide cycle form the mechanistic basis for DNA recombination by continuous HJ branch migration. Branch migration allows RuvC to scan DNA until it finds its consensus sequence, where it cleaves and resolves cruciform DNA. This chain is Holliday junction branch migration complex subunit RuvB, found in Listeria monocytogenes serotype 4b (strain CLIP80459).